Reading from the N-terminus, the 385-residue chain is 1-deoxy-D-xylulose 5-phosphate reductoisomerase (385 aa).

Residues T10, G11, S12, I13, K37, and N124 each coordinate NADPH. K125 is a 1-deoxy-D-xylulose 5-phosphate binding site. Position 126 (E126) interacts with NADPH. D150 provides a ligand contact to Mn(2+). S151, E152, S176, and H199 together coordinate 1-deoxy-D-xylulose 5-phosphate. E152 is a Mn(2+) binding site. An NADPH-binding site is contributed by G205. The 1-deoxy-D-xylulose 5-phosphate site is built by S212, N217, K218, and E221. E221 provides a ligand contact to Mn(2+).

Belongs to the DXR family. It depends on Mg(2+) as a cofactor. Mn(2+) is required as a cofactor.

It carries out the reaction 2-C-methyl-D-erythritol 4-phosphate + NADP(+) = 1-deoxy-D-xylulose 5-phosphate + NADPH + H(+). It functions in the pathway isoprenoid biosynthesis; isopentenyl diphosphate biosynthesis via DXP pathway; isopentenyl diphosphate from 1-deoxy-D-xylulose 5-phosphate: step 1/6. In terms of biological role, catalyzes the NADPH-dependent rearrangement and reduction of 1-deoxy-D-xylulose-5-phosphate (DXP) to 2-C-methyl-D-erythritol 4-phosphate (MEP). This is 1-deoxy-D-xylulose 5-phosphate reductoisomerase from Clostridium botulinum (strain ATCC 19397 / Type A).